A 262-amino-acid polypeptide reads, in one-letter code: L-aspartate dehydrogenase (262 aa).

NAD(+)-binding residues include alanine 128 and asparagine 183. Histidine 213 is a catalytic residue.

The protein belongs to the L-aspartate dehydrogenase family.

The enzyme catalyses L-aspartate + NADP(+) + H2O = oxaloacetate + NH4(+) + NADPH + H(+). The catalysed reaction is L-aspartate + NAD(+) + H2O = oxaloacetate + NH4(+) + NADH + H(+). It functions in the pathway cofactor biosynthesis; NAD(+) biosynthesis; iminoaspartate from L-aspartate (dehydrogenase route): step 1/1. Specifically catalyzes the NAD or NADP-dependent dehydrogenation of L-aspartate to iminoaspartate. The polypeptide is L-aspartate dehydrogenase (Methanopyrus kandleri (strain AV19 / DSM 6324 / JCM 9639 / NBRC 100938)).